Reading from the N-terminus, the 101-residue chain is MAKVSSIKKNESRKKKSQSLHNKRLALKSKIYDKNISLEERFSLVMSLAQLPRNSSSTRIRNRCELTGRPRGVTRKFGISRNKLRELIGRGLVPGVVKSSW.

Residues 1 to 22 form a disordered region; the sequence is MAKVSSIKKNESRKKKSQSLHN. Basic residues predominate over residues 11 to 22; sequence ESRKKKSQSLHN.

The protein belongs to the universal ribosomal protein uS14 family. Part of the 30S ribosomal subunit. Contacts proteins S3 and S10.

Functionally, binds 16S rRNA, required for the assembly of 30S particles and may also be responsible for determining the conformation of the 16S rRNA at the A site. The protein is Small ribosomal subunit protein uS14 of Rickettsia conorii (strain ATCC VR-613 / Malish 7).